The sequence spans 223 residues: Mitochondrial cardiolipin hydrolase (223 aa).

The Mitochondrial intermembrane portion of the chain corresponds to 1–6 (MGCASS). A helical transmembrane segment spans residues 7 to 24 (KEEVALTPLSDVNAAKEV). Over 25 to 223 (ADLKAQVDQL…QFDKLWDMFK (199 aa)) the chain is Cytoplasmic. The PLD phosphodiesterase domain occupies 164-191 (TAAHMHHKFAIIDGRLLLNGSFNWTRQA). Catalysis depends on residues H169, K171, and D176.

This sequence belongs to the phospholipase D family. MitoPLD/Zucchini subfamily. As to quaternary structure, homodimer.

It localises to the mitochondrion outer membrane. Plays a critical role in PIWI-interacting RNA (piRNA) biogenesis. piRNAs provide essential protection against the activity of mobile genetic elements. piRNA-mediated transposon silencing is thus critical for maintaining genome stability. Backbone-non-specific, single strand-specific nuclease, cleaving either RNA or DNA substrates with similar affinity. Produces 5' phosphate and 3' hydroxyl termini, suggesting it could directly participate in the processing of primary piRNA transcripts. Has been proposed to act as a cardiolipin hydrolase to generate phosphatidic acid at mitochondrial surface. Although it cannot be excluded that it can act as a phospholipase in some circumstances, this activity could not be confirmed. The sequence is that of Mitochondrial cardiolipin hydrolase from Chlamydomonas reinhardtii (Chlamydomonas smithii).